A 477-amino-acid polypeptide reads, in one-letter code: Bifunctional protein HldE (477 aa).

A ribokinase region spans residues 1–319; sequence MKITLPPFDQ…RALQEQEQSG (319 aa). An ATP-binding site is contributed by 195-198; that stretch reads NLAE. The active site involves aspartate 264. A cytidylyltransferase region spans residues 344-477; it reads MTNGCFDLLH…IERMQSAPDT (134 aa).

It in the N-terminal section; belongs to the carbohydrate kinase PfkB family. This sequence in the C-terminal section; belongs to the cytidylyltransferase family. In terms of assembly, homodimer.

It carries out the reaction D-glycero-beta-D-manno-heptose 7-phosphate + ATP = D-glycero-beta-D-manno-heptose 1,7-bisphosphate + ADP + H(+). The enzyme catalyses D-glycero-beta-D-manno-heptose 1-phosphate + ATP + H(+) = ADP-D-glycero-beta-D-manno-heptose + diphosphate. It participates in nucleotide-sugar biosynthesis; ADP-L-glycero-beta-D-manno-heptose biosynthesis; ADP-L-glycero-beta-D-manno-heptose from D-glycero-beta-D-manno-heptose 7-phosphate: step 1/4. Its pathway is nucleotide-sugar biosynthesis; ADP-L-glycero-beta-D-manno-heptose biosynthesis; ADP-L-glycero-beta-D-manno-heptose from D-glycero-beta-D-manno-heptose 7-phosphate: step 3/4. Catalyzes the phosphorylation of D-glycero-D-manno-heptose 7-phosphate at the C-1 position to selectively form D-glycero-beta-D-manno-heptose-1,7-bisphosphate. In terms of biological role, catalyzes the ADP transfer from ATP to D-glycero-beta-D-manno-heptose 1-phosphate, yielding ADP-D-glycero-beta-D-manno-heptose. This Alkalilimnicola ehrlichii (strain ATCC BAA-1101 / DSM 17681 / MLHE-1) protein is Bifunctional protein HldE.